The sequence spans 528 residues: MAEKVYIYDTTLRDGSQMEGVSFSLEDKIRIAEKLDDFGIHYIEGGWPYANPKDNLFFQKAKKMNFKNAKLTAFGSTRRPNKKVSEDPQVESLIKAETPVVTIFGKSWDLHVTDALKTTLEENLNMIYETVEYLKRYVDEVIFDAEHFFDGYKSNPEYALQVLEAALKGGADWVVLCDTNGGTLPHEIYEITKKVKERFKDANVGIHAHNDSETAVANSLMAVLAGARQVHGTINGIGERTGNANLCSIIPNLQLKLGFDVIPQENLKKLTELANFVAEIINMPLPRNMPYVGESAFAHKGGVHASAVLKNAKTYEHINPELVGNKRKITVSDLAGRSNLVHKLKEFGIEIDPKSPELKKLIDKIKELEKEGYHFEAAEASLELLIKRHFGLVKDYFDFDAYRVLIAKRRDDSLPTSEATVRLSVEGVEEHTASLGNGPISALDRALRKALEEFYPNLKELQLIDYKVRIINESAGTSAKVRVLIESTDGKRKWGTVGVSENVIEASWIALRDSIVYKLMKDEEEGIL.

The Pyruvate carboxyltransferase domain occupies 5–271; that stretch reads VYIYDTTLRD…IPQENLKKLT (267 aa).

It belongs to the alpha-IPM synthase/homocitrate synthase family.

It carries out the reaction pyruvate + acetyl-CoA + H2O = (3R)-citramalate + CoA + H(+). It functions in the pathway amino-acid biosynthesis; L-isoleucine biosynthesis; 2-oxobutanoate from pyruvate: step 1/3. Its function is as follows. Catalyzes the condensation of pyruvate and acetyl-coenzyme A to form (R)-citramalate. The chain is (R)-citramalate synthase from Aquifex aeolicus (strain VF5).